The primary structure comprises 184 residues: dCTP deaminase (184 aa).

Residues 107 to 112, 131 to 133, Q152, Y166, and Q176 contribute to the dCTP site; these read KSTYAR and TLE. The active-site Proton donor/acceptor is E133.

Belongs to the dCTP deaminase family. Homotrimer.

It carries out the reaction dCTP + H2O + H(+) = dUTP + NH4(+). The protein operates within pyrimidine metabolism; dUMP biosynthesis; dUMP from dCTP (dUTP route): step 1/2. Its function is as follows. Catalyzes the deamination of dCTP to dUTP. The sequence is that of dCTP deaminase from Rhizorhabdus wittichii (strain DSM 6014 / CCUG 31198 / JCM 15750 / NBRC 105917 / EY 4224 / RW1) (Sphingomonas wittichii).